A 221-amino-acid chain; its full sequence is Probable septum site-determining protein MinC (221 aa).

The protein belongs to the MinC family. In terms of assembly, interacts with MinD and FtsZ.

Cell division inhibitor that blocks the formation of polar Z ring septums. Rapidly oscillates between the poles of the cell to destabilize FtsZ filaments that have formed before they mature into polar Z rings. Prevents FtsZ polymerization. This chain is Probable septum site-determining protein MinC, found in Shewanella loihica (strain ATCC BAA-1088 / PV-4).